The chain runs to 235 residues: Uridylate kinase (235 aa).

ATP is bound at residue 8 to 11; the sequence is KFSG. An involved in allosteric activation by GTP region spans residues 16-21; it reads GAEGYG. Gly50 is a binding site for UMP. ATP-binding residues include Gly51 and Arg55. UMP-binding positions include Asp71 and 132 to 139; that span reads TGNPYFTT. Residues Thr159, Tyr165, and Asp168 each contribute to the ATP site.

This sequence belongs to the UMP kinase family. In terms of assembly, homohexamer.

The protein resides in the cytoplasm. The enzyme catalyses UMP + ATP = UDP + ADP. It participates in pyrimidine metabolism; CTP biosynthesis via de novo pathway; UDP from UMP (UMPK route): step 1/1. Allosterically activated by GTP. Inhibited by UTP. In terms of biological role, catalyzes the reversible phosphorylation of UMP to UDP. The protein is Uridylate kinase of Aliarcobacter butzleri (strain RM4018) (Arcobacter butzleri).